The sequence spans 563 residues: DNA mismatch repair protein MutL (563 aa).

The protein belongs to the DNA mismatch repair MutL/HexB family.

This protein is involved in the repair of mismatches in DNA. It is required for dam-dependent methyl-directed DNA mismatch repair. May act as a 'molecular matchmaker', a protein that promotes the formation of a stable complex between two or more DNA-binding proteins in an ATP-dependent manner without itself being part of a final effector complex. The chain is DNA mismatch repair protein MutL from Trichormus variabilis (strain ATCC 29413 / PCC 7937) (Anabaena variabilis).